Consider the following 765-residue polypeptide: E3 ubiquitin-protein ligase SlrP (765 aa).

Positions 1–453 are interaction with target proteins; that stretch reads MFNITNIQST…YQGPRVLFAM (453 aa). LRR repeat units lie at residues 200–219, 221–242, 243–262, 263–284, 285–305, 306–325, 326–346, 347–368, 369–389, and 390–410; these read QITT…ENLQ, NIKT…LPDT, IQEM…RLPS, ALQS…LPEE, LRYL…LPSE, ITHL…TLPP, GLKT…SLPP, ELQV…LPPT, ITTL…LPAA, and LQIM…LPHF. The tract at residues 454-461 is linker; sequence GDFSIVRV. An E3 ubiquitin-protein ligase catalytic domain region spans residues 462–765; it reads TRPLHQAVQG…VSSLMSAYWR (304 aa). The NEL domain occupies 464–758; that stretch reads PLHQAVQGWL…NILLKKEVSS (295 aa). The active-site Glycyl thioester intermediate is the C546.

This sequence belongs to the LRR-containing bacterial E3 ligase family. In terms of assembly, interacts with host TXN. Post-translationally, ubiquitinated in the presence of host E1 ubiquitin-activating enzyme, E2 ubiquitin-conjugating enzyme and ubiquitin.

The protein resides in the secreted. It localises to the host cytoplasm. It catalyses the reaction S-ubiquitinyl-[E2 ubiquitin-conjugating enzyme]-L-cysteine + [acceptor protein]-L-lysine = [E2 ubiquitin-conjugating enzyme]-L-cysteine + N(6)-ubiquitinyl-[acceptor protein]-L-lysine.. Effector proteins function to alter host cell physiology and promote bacterial survival in host tissues. This protein is an E3 ubiquitin ligase that interferes with host's ubiquitination pathway. Can ubiquitinate both ubiquitin and host TXN (thioredoxin). Leads to significant decrease of thioredoxin activity and increase of host cell death. The protein is E3 ubiquitin-protein ligase SlrP (slrP) of Salmonella typhimurium (strain 14028s / SGSC 2262).